The primary structure comprises 353 residues: Photosystem II D2 protein (353 aa).

Thr2 carries the post-translational modification N-acetylthreonine. At Thr2 the chain carries Phosphothreonine. The chain crosses the membrane as a helical span at residues 41-61 (CAYFALGGWFTGTTFVTSWYT). Position 118 (His118) interacts with chlorophyll a. Residues 125-141 (GFMLRQFELARSVQLRP) traverse the membrane as a helical segment. Residues Gln130 and Asn143 each coordinate pheophytin a. Residues 153-166 (VFVSVFLIYPLGQS) traverse the membrane as a helical segment. His198 serves as a coordination point for chlorophyll a. A helical transmembrane segment spans residues 208–228 (AALLCAIHGATVENTLFEDGD). Residues His215 and Phe262 each contribute to the a plastoquinone site. Residue His215 participates in Fe cation binding. Residue His269 coordinates Fe cation. Residues 279–295 (GLWMSALGVVGLALNLR) traverse the membrane as a helical segment.

Belongs to the reaction center PufL/M/PsbA/D family. As to quaternary structure, PSII is composed of 1 copy each of membrane proteins PsbA, PsbB, PsbC, PsbD, PsbE, PsbF, PsbH, PsbI, PsbJ, PsbK, PsbL, PsbM, PsbT, PsbX, PsbY, PsbZ, Psb30/Ycf12, at least 3 peripheral proteins of the oxygen-evolving complex and a large number of cofactors. It forms dimeric complexes. The D1/D2 heterodimer binds P680, chlorophylls that are the primary electron donor of PSII, and subsequent electron acceptors. It shares a non-heme iron and each subunit binds pheophytin, quinone, additional chlorophylls, carotenoids and lipids. There is also a Cl(-1) ion associated with D1 and D2, which is required for oxygen evolution. The PSII complex binds additional chlorophylls, carotenoids and specific lipids. serves as cofactor.

It is found in the plastid. It localises to the chloroplast thylakoid membrane. The enzyme catalyses 2 a plastoquinone + 4 hnu + 2 H2O = 2 a plastoquinol + O2. Functionally, photosystem II (PSII) is a light-driven water:plastoquinone oxidoreductase that uses light energy to abstract electrons from H(2)O, generating O(2) and a proton gradient subsequently used for ATP formation. It consists of a core antenna complex that captures photons, and an electron transfer chain that converts photonic excitation into a charge separation. The D1/D2 (PsbA/PsbD) reaction center heterodimer binds P680, the primary electron donor of PSII as well as several subsequent electron acceptors. D2 is needed for assembly of a stable PSII complex. This is Photosystem II D2 protein from Citrus sinensis (Sweet orange).